The chain runs to 474 residues: Cbb3-type cytochrome c oxidase subunit CcoN1 (474 aa).

Residues 1 to 16 (MNTATSTAYSYKVVRQ) are Cytoplasmic-facing. A helical transmembrane segment spans residues 17–37 (FAIMTVVWGIVGMGLGVFIAA). Residues 38–60 (QLAWPFLNFDLPWTSFGRLRPLH) are Periplasmic-facing. His-60 contributes to the heme b binding site. Residues 61–81 (TNAVIFAFGGCALFATSYYSV) traverse the membrane as a helical segment. The Cytoplasmic portion of the chain corresponds to 82 to 96 (QRTCQTTLFAPKLAA). Residues 97–117 (FTFWGWQLVILLAAISLPLGF) traverse the membrane as a helical segment. Residues 118 to 129 (TSSKEYAELEWP) are Periplasmic-facing. The helical transmembrane segment at 130 to 150 (IDILITIVWVAYAVVFFGTLA) threads the bilayer. Residues 151–156 (KRKVKH) are Cytoplasmic-facing. Residues 157–177 (IYVGNWFFGAFILTVAILHVV) traverse the membrane as a helical segment. Residues 178–205 (NNLEIPVTAMKSYSLYAGATDAMVQWWY) are Periplasmic-facing. A helical transmembrane segment spans residues 206–226 (GHNAVGFFLTAGFLGIMYYFV). His-207 is a binding site for Cu cation. At 227 to 238 (PKQAERPVYSYR) the chain is on the cytoplasmic side. Residues 239 to 259 (LSIVHFWALITVYIWAGPHHL) form a helical membrane-spanning segment. His-257 and His-258 together coordinate Cu cation. Residues 260 to 270 (HYTALPDWAQS) are Periplasmic-facing. The chain crosses the membrane as a helical span at residues 271–291 (LGMVMSLILLAPSWGGMINGM). Residues 292–308 (MTLSGAWHKLRSDPILR) lie on the Cytoplasmic side of the membrane. A helical transmembrane segment spans residues 309–329 (FLVVSLAFYGMSTFEGPMMAI). Topologically, residues 330–345 (KTVNALSHYTDWTIGH) are periplasmic. Heme b is bound by residues His-345 and His-347. Residues 346–366 (VHAGALGWVAMVSIGALYHLV) form a helical membrane-spanning segment. Residues 367-384 (PKVFGREQMHSIGLINTH) lie on the Cytoplasmic side of the membrane. The helical transmembrane segment at 385-405 (FWLATIGTVLYIASMWVNGIA) threads the bilayer. At 406–432 (QGLMWRAINDDGTLTYSFVESLEASHP) the chain is on the periplasmic side. Residues 433 to 453 (GFVVRMIGGAIFFAGMLVMAY) traverse the membrane as a helical segment. Over 454-474 (NTWRTVQAAKPAEYDAAAQIA) the chain is Cytoplasmic.

It belongs to the heme-copper respiratory oxidase family. As to quaternary structure, component of the cbb3-type cytochrome c oxidase at least composed of CcoN, CcoO, CcoQ and CcoP. Requires Cu(2+) as cofactor. Heme b serves as cofactor.

The protein localises to the cell inner membrane. The catalysed reaction is 4 Fe(II)-[cytochrome c] + O2 + 8 H(+)(in) = 4 Fe(III)-[cytochrome c] + 2 H2O + 4 H(+)(out). The protein operates within energy metabolism; oxidative phosphorylation. In terms of biological role, cbb3-type cytochrome c oxidase is the component of the respiratory chain that catalyzes the reduction of oxygen to water. Subunits CcoN and CcoO form the functional core of the enzyme complex. Subunits CcoP and CcoQ may optionally bind to the core. CcoN is the catalytic subunit of the enzyme. Electrons originating in cytochrome c or a quinol are transferred to the bimetallic center formed by a high-spin heme and copper B. The complex also functions as a proton pump. The polypeptide is Cbb3-type cytochrome c oxidase subunit CcoN1 (Stutzerimonas stutzeri (Pseudomonas stutzeri)).